The sequence spans 792 residues: MKFSENWLRTFVNPPLSTRDLAHALTMAGLEVESVEPVAPAFHKVVVAEVLSVQKHPDADHLQVCKVKTGAAGNDEPLQIVCGAANVRAGIKVPCALSGAQLPGMAIKQTRIRGVESTGMLCSAKELGLEDASSGLLLLSPDAPVGTDFRAYYDLEDNLLTLKLTPNRGDCLGLSGIAREVAAITSQNRQSVEIKPVSAQIAETLAIHVDAATACPLYCGRVVRGISLDVATPQWMVQRLERSGLRAINPVVDVTNYVMLETGQPLHAFDLARIQGGLAGSIHIRFARPGESIELLNGENLVLQPDMLVIADDAKPLALAGIMGGNESGVTSGAVDLFLESAFFSPGVIAGKSFSLGFSSDSAYRFERGVDFGATRAAMERATDLILNICGGRVGPVTELRGSLPARDPIRLGLERVGRVLGVELDEGRVAELLHRLQFGFLNTDAVFYVTPPTYRFDLAIEEDLIEELARMYGYNRIAATMPRAKLDILSAPETRRTRSRLRQILVARDYQEVINYAFVETSWETELAGNRTPIALKNPLSNQLAVMRSSLLGGLISNLQFNLNRKQSRIRLFEIGGCFQKDGQTYSQQEKLAGLCYGDVVEEQWGLPARPVDFYDAKADIEALLWPGELRVAAARHPALHPGKSAEISIDGRIGGFLGELHPRWQQKLGLARSVVLFELNVDVLLARTLPQASEISKYPPIRRDIAVLVPKDVSVQAILDSMRSEKLSIISEIALFDVYQGKGVESDKKSLAFRMLLQDTEKTLTDAQADQVVAKLISVLENRFGARLRS.

The 112-residue stretch at 39-150 folds into the tRNA-binding domain; that stretch reads APAFHKVVVA…PDAPVGTDFR (112 aa). The 76-residue stretch at 405–480 folds into the B5 domain; that stretch reads PARDPIRLGL…RMYGYNRIAA (76 aa). The Mg(2+) site is built by D458, D464, E467, and E468. The FDX-ACB domain occupies 698-791; that stretch reads SKYPPIRRDI…LENRFGARLR (94 aa).

Belongs to the phenylalanyl-tRNA synthetase beta subunit family. Type 1 subfamily. In terms of assembly, tetramer of two alpha and two beta subunits. Mg(2+) is required as a cofactor.

The protein resides in the cytoplasm. The catalysed reaction is tRNA(Phe) + L-phenylalanine + ATP = L-phenylalanyl-tRNA(Phe) + AMP + diphosphate + H(+). The protein is Phenylalanine--tRNA ligase beta subunit of Nitrosospira multiformis (strain ATCC 25196 / NCIMB 11849 / C 71).